We begin with the raw amino-acid sequence, 61 residues long: Metallothionein-2 (61 aa).

Met1 bears the N-acetylmethionine mark. The beta stretch occupies residues 1–29; the sequence is MDPNCSCAAGGSCTCAGSCKCKECRCTSC. Positions 5, 7, 13, 15, 19, 21, 24, 26, 29, 33, 34, 36, 37, 41, 44, 48, 50, and 57 each coordinate a divalent metal cation. An alpha region spans residues 30–61; the sequence is KKSCCSCCPVGCAKCAQGCICKGASDKCSCCA. Phosphoserine is present on Ser58. Residues Cys59 and Cys60 each coordinate a divalent metal cation.

Belongs to the metallothionein superfamily. Type 1 family. As to quaternary structure, interacts with EOLA1.

Functionally, metallothioneins have a high content of cysteine residues that bind various heavy metals; these proteins are transcriptionally regulated by both heavy metals and glucocorticoids. The polypeptide is Metallothionein-2 (MT2A) (Canis lupus familiaris (Dog)).